Reading from the N-terminus, the 228-residue chain is uncharacterized protein (228 aa).

The next 4 membrane-spanning stretches (helical) occupy residues Trp37–Val54, Val67–Val89, His104–Leu126, and Val138–Tyr160.

It is found in the cell membrane. This is an uncharacterized protein from Treponema pallidum (strain Nichols).